The primary structure comprises 101 residues: Gastrin (101 aa).

Positions 1–21 are cleaved as a signal peptide; sequence MPRLCVYMLVLVLALATFSEA. The segment at 23–101 is disordered; the sequence is WKPRSQLQDA…FGRRSAEEDQ (79 aa). Polar residues predominate over residues 25 to 37; it reads PRSQLQDASSGPG. Tyr-87 is modified (sulfotyrosine). Phe-92 carries the phenylalanine amide modification. Over residues 92 to 101 the composition is skewed to basic and acidic residues; sequence FGRRSAEEDQ. Ser-96 bears the Phosphoserine mark. A propeptide spanning residues 96–101 is cleaved from the precursor; that stretch reads SAEEDQ.

This sequence belongs to the gastrin/cholecystokinin family. In terms of processing, sulfation enhances proteolytic processing, and blocks peptide degradation. Levels of sulfation differ between proteolytically-cleaved gastrins and between tissues. As to expression, abundantly expressed in the stomach and duodenum. Low levels in brain, ovary and pancreas.

It is found in the secreted. Gastrin stimulates the stomach mucosa to produce and secrete hydrochloric acid and the pancreas to secrete its digestive enzymes. It also stimulates smooth muscle contraction and increases blood circulation and water secretion in the stomach and intestine. This Mus musculus (Mouse) protein is Gastrin (Gast).